Consider the following 448-residue polypeptide: Mitochondrial distribution and morphology protein 10 (448 aa).

Disordered stretches follow at residues 101-126 and 366-386; these read QIHPPLAPESPNESRHAEPNERSEKA and PPLPPSPVKGTSASAVTPAGE. Positions 112–126 are enriched in basic and acidic residues; the sequence is NESRHAEPNERSEKA.

Belongs to the MDM10 family. Component of the ER-mitochondria encounter structure (ERMES) or MDM complex, composed of MMM1, MDM10, MDM12 and MDM34. Associates with the mitochondrial outer membrane sorting assembly machinery SAM(core) complex.

Its subcellular location is the mitochondrion outer membrane. Its function is as follows. Component of the ERMES/MDM complex, which serves as a molecular tether to connect the endoplasmic reticulum and mitochondria. Components of this complex are involved in the control of mitochondrial shape and protein biogenesis and may function in phospholipid exchange. MDM10 is involved in the late assembly steps of the general translocase of the mitochondrial outer membrane (TOM complex). Functions in the TOM40-specific route of the assembly of outer membrane beta-barrel proteins, including the association of TOM40 with the receptor TOM22 and small TOM proteins. Can associate with the SAM(core) complex as well as the MDM12-MMM1 complex, both involved in late steps of the major beta-barrel assembly pathway, that is responsible for biogenesis of all outer membrane beta-barrel proteins. May act as a switch that shuttles between both complexes and channels precursor proteins into the TOM40-specific pathway. Plays a role in mitochondrial morphology and in the inheritance of mitochondria. This chain is Mitochondrial distribution and morphology protein 10, found in Coccidioides immitis (strain RS) (Valley fever fungus).